The sequence spans 410 residues: Phosphoserine phosphatase (410 aa).

An ACT domain is found at 13 to 91 (LVKIFGKDRP…QAEIISGIGD (79 aa)). D187 functions as the Nucleophile in the catalytic mechanism. The Mg(2+) site is built by D187 and D189. Residue D189 is the Proton donor of the active site. Residues E196, R232, 275–276 (SG), and K320 each bind substrate. Residue D343 coordinates Mg(2+). Residue N346 participates in substrate binding.

Belongs to the HAD-like hydrolase superfamily. SerB family. Mg(2+) is required as a cofactor.

It catalyses the reaction O-phospho-L-serine + H2O = L-serine + phosphate. It carries out the reaction O-phospho-D-serine + H2O = D-serine + phosphate. The protein operates within amino-acid biosynthesis; L-serine biosynthesis; L-serine from 3-phospho-D-glycerate: step 3/3. Its function is as follows. Catalyzes the dephosphorylation of phosphoserine (P-Ser) in vitro. Also catalyzes the dephosphorylation of phosphothreonine (P-Thr) in vitro. The polypeptide is Phosphoserine phosphatase (Streptomyces coelicolor (strain ATCC BAA-471 / A3(2) / M145)).